A 265-amino-acid polypeptide reads, in one-letter code: Undecaprenyl-diphosphatase (265 aa).

Helical transmembrane passes span 1-21 (MDIF…FLPI), 39-59 (QGVG…VLYF), 84-104 (ALAW…LALL), 114-134 (ASVI…ADWL), 144-164 (LNWK…VPGT), 187-207 (FSFL…LLEV), 218-238 (GFLI…HFFL), and 244-264 (VGMW…YAVL).

It belongs to the UppP family.

It localises to the cell inner membrane. It carries out the reaction di-trans,octa-cis-undecaprenyl diphosphate + H2O = di-trans,octa-cis-undecaprenyl phosphate + phosphate + H(+). Catalyzes the dephosphorylation of undecaprenyl diphosphate (UPP). Confers resistance to bacitracin. This is Undecaprenyl-diphosphatase from Marinobacter nauticus (strain ATCC 700491 / DSM 11845 / VT8) (Marinobacter aquaeolei).